We begin with the raw amino-acid sequence, 324 residues long: MATH domain and coiled-coil domain-containing protein At3g44790 (324 aa).

In terms of domain architecture, MATH spans 3-125 (YEKFTWVIKN…NNEVKIVVEV (123 aa)). Residues 241-309 (FKVDWLERKL…ALLEKEKAKS (69 aa)) are a coiled coil.

The protein is MATH domain and coiled-coil domain-containing protein At3g44790 of Arabidopsis thaliana (Mouse-ear cress).